The chain runs to 377 residues: Fructose-bisphosphate aldolase 1, chloroplastic (377 aa).

Substrate is bound by residues Arg-74 and Lys-164. Glu-204 functions as the Proton acceptor in the catalytic mechanism. Lys-246 acts as the Schiff-base intermediate with dihydroxyacetone-P in catalysis.

This sequence belongs to the class I fructose-bisphosphate aldolase family.

The protein localises to the plastid. The protein resides in the chloroplast. The catalysed reaction is beta-D-fructose 1,6-bisphosphate = D-glyceraldehyde 3-phosphate + dihydroxyacetone phosphate. It participates in carbohydrate degradation; glycolysis; D-glyceraldehyde 3-phosphate and glycerone phosphate from D-glucose: step 4/4. The sequence is that of Fructose-bisphosphate aldolase 1, chloroplastic (ALDCHL) from Chlamydomonas reinhardtii (Chlamydomonas smithii).